The chain runs to 142 residues: Large ribosomal subunit protein bL17 (142 aa).

The protein belongs to the bacterial ribosomal protein bL17 family. Part of the 50S ribosomal subunit. Contacts protein L32.

The protein is Large ribosomal subunit protein bL17 of Chlamydia pneumoniae (Chlamydophila pneumoniae).